The following is a 634-amino-acid chain: Fluorothreonine transaldolase (634 aa).

Y67, H221, and H247 together coordinate pyridoxal 5'-phosphate. K248 is modified (N6-(pyridoxal phosphate)lysine). R375 contributes to the pyridoxal 5'-phosphate binding site. A disordered region spans residues 428–456 (TGDPASAAGPPARERYAPPTAPAGHPARP).

This sequence belongs to the SHMT family. Pyridoxal 5'-phosphate serves as cofactor.

It catalyses the reaction fluoroacetaldehyde + L-threonine = 4-fluoro-L-threonine + acetaldehyde. Its function is as follows. Transaldolase that catalyzes the final step in 4-fluorothreonine biosynthesis. Mediates a L-threonine/fluoroaceldehyde to 4-fluoro-L-threonine/acetaldehyde crossover reaction. Can also convert chloroacetaldehyde into 4-chloro-L-threonine. Does not use glycine as a substrate. In Streptantibioticus cattleyicolor (Streptomyces cattleya), this protein is Fluorothreonine transaldolase.